We begin with the raw amino-acid sequence, 183 residues long: Ribosome-recycling factor (183 aa).

The tract at residues 134 to 156 is disordered; it reads DANDELKKHQSEMSQDEVKGHQD.

It belongs to the RRF family.

It localises to the cytoplasm. Responsible for the release of ribosomes from messenger RNA at the termination of protein biosynthesis. May increase the efficiency of translation by recycling ribosomes from one round of translation to another. The polypeptide is Ribosome-recycling factor (Leptospira biflexa serovar Patoc (strain Patoc 1 / Ames)).